A 445-amino-acid chain; its full sequence is Exodeoxyribonuclease 7 large subunit (445 aa).

It belongs to the XseA family. In terms of assembly, heterooligomer composed of large and small subunits.

It is found in the cytoplasm. It carries out the reaction Exonucleolytic cleavage in either 5'- to 3'- or 3'- to 5'-direction to yield nucleoside 5'-phosphates.. Functionally, bidirectionally degrades single-stranded DNA into large acid-insoluble oligonucleotides, which are then degraded further into small acid-soluble oligonucleotides. The protein is Exodeoxyribonuclease 7 large subunit of Staphylococcus saprophyticus subsp. saprophyticus (strain ATCC 15305 / DSM 20229 / NCIMB 8711 / NCTC 7292 / S-41).